Here is a 1217-residue protein sequence, read N- to C-terminus: Nuclear matrix constituent protein 1 (1217 aa).

The span at 1 to 14 (MLTPQRSAWSLKSK) shows a compositional bias: polar residues. Residues 1 to 45 (MLTPQRSAWSLKSKVSSEKPRSKGKGITKNLDSAATPFPPLGLLN) form a disordered region. Residues 159 to 746 (VTDLEKALRE…KNQRAEFIKE (588 aa)) are a coiled coil. A compositionally biased stretch (low complexity) spans 892–904 (SEDAAANDNNPAA). Disordered regions lie at residues 892 to 969 (SEDA…VVDD), 981 to 1057 (EEAK…VQAP), 1087 to 1117 (VQTK…HKVT), and 1152 to 1217 (ISEM…FFTT). Basic residues predominate over residues 947-960 (STRRGRGGKTVRRT). Composition is skewed to polar residues over residues 986–1007 (SSQQ…TSNT) and 1087–1103 (VQTK…NQIS). The segment covering 1173–1186 (EEPATPSSGSSTSG) has biased composition (low complexity). Residues 1189–1200 (GNDDDMDDDDEE) are compositionally biased toward acidic residues.

It belongs to the CRWN family.

It localises to the nucleus matrix. The protein localises to the nucleus lamina. Functionally, architectural component of nuclear structure that plays different roles in controlling nuclear size and morphology. Involved in the organization of multimeric complexes in the peripheral nucleoskeleton. This is Nuclear matrix constituent protein 1 from Allium cepa (Onion).